The following is a 344-amino-acid chain: Beta-hexosaminidase (344 aa).

Substrate contacts are provided by residues Asp-60, Arg-68, Arg-132, and 162–163 (KH). Residue His-175 is the Proton donor/acceptor of the active site. Asp-247 functions as the Nucleophile in the catalytic mechanism.

This sequence belongs to the glycosyl hydrolase 3 family. NagZ subfamily.

The protein resides in the cytoplasm. It carries out the reaction Hydrolysis of terminal non-reducing N-acetyl-D-hexosamine residues in N-acetyl-beta-D-hexosaminides.. Its pathway is cell wall biogenesis; peptidoglycan recycling. In terms of biological role, plays a role in peptidoglycan recycling by cleaving the terminal beta-1,4-linked N-acetylglucosamine (GlcNAc) from peptide-linked peptidoglycan fragments, giving rise to free GlcNAc, anhydro-N-acetylmuramic acid and anhydro-N-acetylmuramic acid-linked peptides. This chain is Beta-hexosaminidase, found in Haemophilus ducreyi (strain 35000HP / ATCC 700724).